The sequence spans 183 residues: Ankyrin repeat domain-containing protein 39 (183 aa).

ANK repeat units lie at residues 30–59 (DFER…DPSQ), 63–92 (AGYT…KCDA), 96–125 (GGAT…NPRL), and 129–158 (DGMT…ALKA). Ser-153 carries the post-translational modification Phosphoserine.

Belongs to the ANKRD39 family.

This is Ankyrin repeat domain-containing protein 39 (ANKRD39) from Bos taurus (Bovine).